A 111-amino-acid polypeptide reads, in one-letter code: 4'-hydroxy-3'-methoxypropiophenone carrier protein ppsC (111 aa).

Residues 1 to 21 (MSAQVMRPGTPQHEGQEFLSG) are disordered.

It functions in the pathway secondary metabolite biosynthesis. Functionally, 4'-hydroxy-3'-methoxypropiophenone carrier protein; part of the gene cluster that mediates the biosynthesis of 2,4'-dihydroxy-3'-methoxypropiophenone. The first step of the pathway is the conversion of acetate into acetyl-CoA by the acyl-CoA ligase ppsA. Acetyl-CoA is then used as a starter unit by the polyketide synthase ppsB and condensed with 4 malonyl-CoA unit to produce the pentaketide backbone. During polyketide extension, the polykedite chain is probably reduced and dehydrated by the KR and PT domains, respectively. O-methylation seems to be catalyzed by an unknown methyltransferase rather than by the CMeT domain of ppsB. Two hydroxylations and one further decarboxylation step catalyzed by yet unknown enzymes are then required to yield 4'-hydroxy-3'-methoxypropiophenone. PpsC functions as a carrier protein to transport 4'-hydroxy-3'-methoxypropiophenone to a specific cell compartment in which 4'-hydroxy-3'-methoxypropiophenone is hydroxylated to 2,4'-dihydroxy-3'-methoxypropiophenone by a still to be identified enzyme. The protein is 4'-hydroxy-3'-methoxypropiophenone carrier protein ppsC of Aspergillus oryzae (strain ATCC 42149 / RIB 40) (Yellow koji mold).